The chain runs to 544 residues: Serine/threonine-protein kinase PAK 1 (544 aa).

Residues 1–77 are disordered; it reads MSNNGLDIQD…KEKERPEISL (77 aa). Residue serine 2 is modified to N-acetylserine. Serine 21 carries the phosphoserine; by PKB and autocatalysis modification. Over residues 68 to 77 the composition is skewed to basic and acidic residues; the sequence is KEKERPEISL. Residues 70–140 are autoregulatory region; it reads KERPEISLPS…YNSKKTSNSQ (71 aa). The 14-residue stretch at 75 to 88 folds into the CRIB domain; the sequence is ISLPSDFEHTIHVG. A GTPase-binding region spans residues 75 to 105; sequence ISLPSDFEHTIHVGFDAVTGEFTGMPEQWAR. Threonine 84 is subject to Phosphothreonine; by OXSR1. Residue serine 115 is modified to Phosphoserine. Tyrosine 131 and tyrosine 142 each carry phosphotyrosine. 2 positions are modified to phosphoserine; by autocatalysis: serine 144 and serine 149. The residue at position 153 (tyrosine 153) is a Phosphotyrosine; by JAK2. The segment at 161-193 is disordered; it reads VKAVSETPAVPPVSEDEDDDDDGTPPPVIAPRP. Serine 174 is subject to Phosphoserine. Positions 174–183 are enriched in acidic residues; sequence SEDEDDDDDG. The residue at position 184 (threonine 184) is a Phosphothreonine. Serine 198 bears the Phosphoserine; by autocatalysis mark. Tyrosine 200 carries the post-translational modification Phosphotyrosine; by JAK2. Residue serine 203 is modified to Phosphoserine; by autocatalysis. Phosphothreonine occurs at positions 211 and 218. The disordered stretch occupies residues 212 to 250; the sequence is PTRDVATSPISPTENNTTPPDALTRNTEKQKKKPKMSDE. Phosphoserine occurs at positions 219 and 222. Over residues 219–230 the composition is skewed to polar residues; it reads SPISPTENNTTP. Phosphothreonine occurs at positions 224, 228, and 229. In terms of domain architecture, Protein kinase spans 269–520; sequence YTRFEKIGQG…AKELLQHQFL (252 aa). 275–283 serves as a coordination point for ATP; the sequence is IGQGASGTV. Tyrosine 284 carries the phosphotyrosine; by JAK2 modification. Lysine 298 serves as a coordination point for ATP. Residue aspartate 388 is the Proton acceptor of the active site. Threonine 422 carries the post-translational modification Phosphothreonine; by autocatalysis, BRSK2 and PDPK1.

The protein belongs to the protein kinase superfamily. STE Ser/Thr protein kinase family. STE20 subfamily. Homodimer in its autoinhibited state. Active as monomer. Interacts with GIT1. Component of cytoplasmic complexes, which also contains PXN, ARHGEF7 and GIT1. Interacts with NISCH. Interacts with DVL1; mediates the formation of a DVL1, MUSK and PAK1 ternary complex involved in AChR clustering. Binds to the caspase-cleaved p110 isoform of CDC2L1 and CDC2L2, p110C, but not the full-length proteins. Interacts with ARHGEF7. Interacts tightly with GTP-bound but not GDP-bound CDC42/P21 and RAC1. Probably found in a ternary complex composed of DSCAM, PAK1 and RAC1. Interacts with DSCAM (via cytoplasmic domain); the interaction is direct and enhanced in presence of RAC1. Interacts with SCRIB. Interacts with PDPK1. Interacts (via kinase domain) with RAF1. Interacts with NCK1 and NCK2. Interacts with TBCB. Interacts with BRSK2. Interacts with SNAI1. Interacts with CIB1 (via N-terminal region); the interaction is direct, promotes PAK1 activity and occurs in a calcium-dependent manner. Interacts with INPP5K. Interacts with gamma-tubulin. Interacts with RHOU; the interaction promotes PAK1 activation. The cofactor is Mg(2+). In terms of processing, autophosphorylated in trans, meaning that in a dimer, one kinase molecule phosphorylates the other one. Activated by autophosphorylation at Thr-422 in response to a conformation change, triggered by interaction with GTP-bound CDC42 or RAC1. Activated by phosphorylation at Thr-422 by BRSK2 and by PDPK1. Phosphorylated by JAK2 in response to PRL; this increases PAK1 kinase activity. Phosphorylated at Ser-21 by PKB/AKT; this reduces interaction with NCK1 and association with focal adhesion sites. Upon DNA damage, phosphorylated at Thr-211 and translocates to the nucleoplasm. Phosphorylated at tyrosine residues, which can be enhanced by NTN1.

Its subcellular location is the cytoplasm. It is found in the cell junction. The protein resides in the focal adhesion. It localises to the cell projection. The protein localises to the lamellipodium. Its subcellular location is the cell membrane. It is found in the ruffle membrane. The protein resides in the invadopodium. It localises to the nucleus. The protein localises to the nucleoplasm. Its subcellular location is the chromosome. It is found in the cytoskeleton. The protein resides in the microtubule organizing center. It localises to the centrosome. It catalyses the reaction L-seryl-[protein] + ATP = O-phospho-L-seryl-[protein] + ADP + H(+). The catalysed reaction is L-threonyl-[protein] + ATP = O-phospho-L-threonyl-[protein] + ADP + H(+). With respect to regulation, phosphorylation of Thr-84 by OXSR1 inhibits activation. Activated by binding small G proteins. Binding of GTP-bound CDC42 or RAC1 to the autoregulatory region releases monomers from the autoinhibited dimer, and enables activation by phosphorylation of Thr-422. Functionally, protein kinase involved in intracellular signaling pathways downstream of integrins and receptor-type kinases that plays an important role in cytoskeleton dynamics, in cell adhesion, migration, proliferation, apoptosis, mitosis, and in vesicle-mediated transport processes. Can directly phosphorylate BAD and protects cells against apoptosis. Activated by interaction with CDC42 and RAC1. Functions as a GTPase effector that links the Rho-related GTPases CDC42 and RAC1 to the JNK MAP kinase pathway. Phosphorylates and activates MAP2K1, and thereby mediates activation of downstream MAP kinases. Involved in the reorganization of the actin cytoskeleton, actin stress fibers and of focal adhesion complexes. Phosphorylates the tubulin chaperone TBCB and thereby plays a role in the regulation of microtubule biogenesis and organization of the tubulin cytoskeleton. Plays a role in the regulation of insulin secretion in response to elevated glucose levels. Part of a ternary complex that contains PAK1, DVL1 and MUSK that is important for MUSK-dependent regulation of AChR clustering during the formation of the neuromuscular junction (NMJ). Activity is inhibited in cells undergoing apoptosis, potentially due to binding of CDC2L1 and CDC2L2. Phosphorylates MYL9/MLC2. Phosphorylates RAF1 at 'Ser-338' and 'Ser-339' resulting in: activation of RAF1, stimulation of RAF1 translocation to mitochondria, phosphorylation of BAD by RAF1, and RAF1 binding to BCL2. Phosphorylates SNAI1 at 'Ser-246' promoting its transcriptional repressor activity by increasing its accumulation in the nucleus. In podocytes, promotes NR3C2 nuclear localization. Required for atypical chemokine receptor ACKR2-induced phosphorylation of LIMK1 and cofilin (CFL1) and for the up-regulation of ACKR2 from endosomal compartment to cell membrane, increasing its efficiency in chemokine uptake and degradation. In synapses, seems to mediate the regulation of F-actin cluster formation performed by SHANK3, maybe through CFL1 phosphorylation and inactivation. Plays a role in RUFY3-mediated facilitating gastric cancer cells migration and invasion. In response to DNA damage, phosphorylates MORC2 which activates its ATPase activity and facilitates chromatin remodeling. In neurons, plays a crucial role in regulating GABA(A) receptor synaptic stability and hence GABAergic inhibitory synaptic transmission through its role in F-actin stabilization. In hippocampal neurons, necessary for the formation of dendritic spines and excitatory synapses; this function is dependent on kinase activity and may be exerted by the regulation of actomyosin contractility through the phosphorylation of myosin II regulatory light chain (MLC). Along with GIT1, positively regulates microtubule nucleation during interphase. Phosphorylates FXR1, promoting its localization to stress granules and activity. Phosphorylates ILK on 'Thr-173' and 'Ser-246', promoting nuclear export of ILK. This is Serine/threonine-protein kinase PAK 1 from Bos taurus (Bovine).